Here is an 81-residue protein sequence, read N- to C-terminus: Cytochrome b559 subunit alpha (81 aa).

Positions 18 and 23 each coordinate heme. The helical transmembrane segment at 19-40 (YWVIHSITIPMLFIAGWLFVST) threads the bilayer.

Belongs to the PsbE/PsbF family. In terms of assembly, heterodimer of an alpha subunit and a beta subunit. PSII is composed of 1 copy each of membrane proteins PsbA, PsbB, PsbC, PsbD, PsbE, PsbF, PsbH, PsbI, PsbJ, PsbK, PsbL, PsbM, PsbT, PsbX, PsbY, PsbZ, Psb30/Ycf12, peripheral proteins PsbO, CyanoQ (PsbQ), PsbU, PsbV and a large number of cofactors. It forms dimeric complexes. The cofactor is heme b.

The protein localises to the cellular thylakoid membrane. In terms of biological role, this b-type cytochrome is tightly associated with the reaction center of photosystem II (PSII). PSII is a light-driven water:plastoquinone oxidoreductase that uses light energy to abstract electrons from H(2)O, generating O(2) and a proton gradient subsequently used for ATP formation. It consists of a core antenna complex that captures photons, and an electron transfer chain that converts photonic excitation into a charge separation. This chain is Cytochrome b559 subunit alpha, found in Synechocystis sp. (strain ATCC 27184 / PCC 6803 / Kazusa).